The primary structure comprises 126 residues: Small ribosomal subunit protein uS12 (126 aa).

Asp89 carries the 3-methylthioaspartic acid modification.

The protein belongs to the universal ribosomal protein uS12 family. Part of the 30S ribosomal subunit. Contacts proteins S8 and S17. May interact with IF1 in the 30S initiation complex.

Functionally, with S4 and S5 plays an important role in translational accuracy. Its function is as follows. Interacts with and stabilizes bases of the 16S rRNA that are involved in tRNA selection in the A site and with the mRNA backbone. Located at the interface of the 30S and 50S subunits, it traverses the body of the 30S subunit contacting proteins on the other side and probably holding the rRNA structure together. The combined cluster of proteins S8, S12 and S17 appears to hold together the shoulder and platform of the 30S subunit. In Polynucleobacter necessarius subsp. necessarius (strain STIR1), this protein is Small ribosomal subunit protein uS12.